We begin with the raw amino-acid sequence, 60 residues long: UPF0337 protein asr1134 (60 aa).

Composition is skewed to basic and acidic residues over residues 1-18 (MSLEDRAKATGKNIEGKA) and 29-60 (PEDKAEGKAKQAESEVRHGVEDVKDNVKKKID). Residues 1-60 (MSLEDRAKATGKNIEGKAQEALGNVTGDPEDKAEGKAKQAESEVRHGVEDVKDNVKKKID) are disordered.

This sequence belongs to the UPF0337 (CsbD) family.

The polypeptide is UPF0337 protein asr1134 (Nostoc sp. (strain PCC 7120 / SAG 25.82 / UTEX 2576)).